A 210-amino-acid polypeptide reads, in one-letter code: Imidazoleglycerol-phosphate dehydratase (210 aa).

Residues 1–23 form a disordered region; it reads MNDSLLSNGHAPPLRQATVDRQT.

Belongs to the imidazoleglycerol-phosphate dehydratase family.

The protein resides in the cytoplasm. The catalysed reaction is D-erythro-1-(imidazol-4-yl)glycerol 3-phosphate = 3-(imidazol-4-yl)-2-oxopropyl phosphate + H2O. Its pathway is amino-acid biosynthesis; L-histidine biosynthesis; L-histidine from 5-phospho-alpha-D-ribose 1-diphosphate: step 6/9. This Thermosynechococcus vestitus (strain NIES-2133 / IAM M-273 / BP-1) protein is Imidazoleglycerol-phosphate dehydratase.